The chain runs to 346 residues: Protein-glutamate methylesterase/protein-glutamine glutaminase (346 aa).

Residues 6-123 (KVLVVDDSAF…SLDLEKVRDL (118 aa)) enclose the Response regulatory domain. The residue at position 57 (Asp57) is a 4-aspartylphosphate. A CheB-type methylesterase domain is found at 155 to 346 (PFDKTIIVIG…ADSIVRQCKR (192 aa)). Residues Ser166, His193, and Asp289 contribute to the active site.

Belongs to the CheB family. Post-translationally, phosphorylated by CheA. Phosphorylation of the N-terminal regulatory domain activates the methylesterase activity.

The protein resides in the cytoplasm. It carries out the reaction [protein]-L-glutamate 5-O-methyl ester + H2O = L-glutamyl-[protein] + methanol + H(+). The enzyme catalyses L-glutaminyl-[protein] + H2O = L-glutamyl-[protein] + NH4(+). Its function is as follows. Involved in chemotaxis. Part of a chemotaxis signal transduction system that modulates chemotaxis in response to various stimuli. Catalyzes the demethylation of specific methylglutamate residues introduced into the chemoreceptors (methyl-accepting chemotaxis proteins or MCP) by CheR. Also mediates the irreversible deamidation of specific glutamine residues to glutamic acid. The sequence is that of Protein-glutamate methylesterase/protein-glutamine glutaminase from Halalkalibacterium halodurans (strain ATCC BAA-125 / DSM 18197 / FERM 7344 / JCM 9153 / C-125) (Bacillus halodurans).